Reading from the N-terminus, the 122-residue chain is Histone H2B.1 (122 aa).

The segment covering 1–10 has biased composition (low complexity); sequence MAPKKAPAAA. Residues 1–28 are disordered; it reads MAPKKAPAAAAEKKVKKAPTTEKKNKKK. At Ala2 the chain carries N,N,N-trimethylalanine. N6-acetyllysine is present on residues Lys5 and Lys42. Lys116 participates in a covalent cross-link: Glycyl lysine isopeptide (Lys-Gly) (interchain with G-Cter in ubiquitin).

The protein belongs to the histone H2B family. In terms of assembly, the nucleosome is a histone octamer containing two molecules each of H2A, H2B, H3 and H4 assembled in one H3-H4 heterotetramer and two H2A-H2B heterodimers. The octamer wraps approximately 147 bp of DNA. In terms of processing, acetylation occurs almost exclusively in the MAC. Monoubiquitination to form H2BK115ub1 gives a specific tag for epigenetic transcriptional activation and is also prerequisite for H3K4me and H3K79me formation.

The protein resides in the nucleus. The protein localises to the chromosome. In terms of biological role, core component of nucleosome. Nucleosomes wrap and compact DNA into chromatin, limiting DNA accessibility to the cellular machineries which require DNA as a template. Histones thereby play a central role in transcription regulation, DNA repair, DNA replication and chromosomal stability. DNA accessibility is regulated via a complex set of post-translational modifications of histones, also called histone code, and nucleosome remodeling. The protein is Histone H2B.1 (HTB1) of Tetrahymena thermophila (strain SB210).